A 181-amino-acid chain; its full sequence is Ferritin (181 aa).

One can recognise a Ferritin-like diiron domain in the interval 6–155 (RHNYHEDCEP…NLITRLKRAG (150 aa)). Fe cation is bound by residues glutamate 23, glutamate 58, histidine 61, glutamate 103, and glutamine 137.

It belongs to the ferritin family. In terms of assembly, oligomer of 12 or 24 subunits. The functional molecule is roughly spherical and contains a central cavity into which the polymeric mineral iron core is deposited. In terms of processing, the N-terminus is blocked.

Its subcellular location is the cytoplasm. The catalysed reaction is 4 Fe(2+) + O2 + 4 H(+) = 4 Fe(3+) + 2 H2O. In terms of biological role, stores iron in a soluble, non-toxic, readily available form. Important for iron homeostasis. Has ferroxidase activity. Iron is taken up in the ferrous form and deposited as ferric hydroxides after oxidation. In Pacifastacus leniusculus (Signal crayfish), this protein is Ferritin.